A 283-amino-acid chain; its full sequence is Thymidylate synthase (283 aa).

Residue Arg-22 participates in dUMP binding. Cys-160 acts as the Nucleophile in catalysis. DUMP contacts are provided by residues 180 to 183 (RSCD), Asn-191, and 221 to 223 (HIY). Asp-183 is a binding site for (6R)-5,10-methylene-5,6,7,8-tetrahydrofolate. Ser-282 contacts (6R)-5,10-methylene-5,6,7,8-tetrahydrofolate.

Belongs to the thymidylate synthase family. Bacterial-type ThyA subfamily. As to quaternary structure, homodimer.

It is found in the cytoplasm. The enzyme catalyses dUMP + (6R)-5,10-methylene-5,6,7,8-tetrahydrofolate = 7,8-dihydrofolate + dTMP. Its pathway is pyrimidine metabolism; dTTP biosynthesis. Catalyzes the reductive methylation of 2'-deoxyuridine-5'-monophosphate (dUMP) to 2'-deoxythymidine-5'-monophosphate (dTMP) while utilizing 5,10-methylenetetrahydrofolate (mTHF) as the methyl donor and reductant in the reaction, yielding dihydrofolate (DHF) as a by-product. This enzymatic reaction provides an intracellular de novo source of dTMP, an essential precursor for DNA biosynthesis. In Shewanella pealeana (strain ATCC 700345 / ANG-SQ1), this protein is Thymidylate synthase.